The following is a 103-amino-acid chain: N(4)-acetylcytidine amidohydrolase (103 aa).

The region spanning 6–101 is the ASCH domain; it reads ITFFQRFQDD…QTQFYVIEFK (96 aa). Catalysis depends on Lys-21, which acts as the Proton acceptor. The active-site Nucleophile is Thr-24. Glu-74 (proton donor) is an active-site residue.

This sequence belongs to the N(4)-acetylcytidine amidohydrolase family.

The enzyme catalyses N(4)-acetylcytidine + H2O = cytidine + acetate + H(+). It catalyses the reaction N(4)-acetyl-2'-deoxycytidine + H2O = 2'-deoxycytidine + acetate + H(+). It carries out the reaction N(4)-acetylcytosine + H2O = cytosine + acetate + H(+). Catalyzes the hydrolysis of N(4)-acetylcytidine (ac4C). This chain is N(4)-acetylcytidine amidohydrolase (yqfB), found in Escherichia coli O127:H6 (strain E2348/69 / EPEC).